Reading from the N-terminus, the 65-residue chain is UPF0434 protein Rpal_0270 (65 aa).

It belongs to the UPF0434 family.

This is UPF0434 protein Rpal_0270 from Rhodopseudomonas palustris (strain TIE-1).